Consider the following 189-residue polypeptide: MTTSAPRKTVNFITGNQNKLAEVQAILEPTIEVQSQKLDLIEVQGTLEEVTLDKVRRAAEQVEGPVLVEDTCLCFNALKGLPGPYIKWFMESIGHDGLNNLLAAYEDKSAQAVCTFGYSAGPGSEPILFQGITEGKIVPPRGPPFFGWDAIFEYEGQTYAEMDKAEKNKISHRGKALEKLQAWFAQREN.

14 to 19 (TGNQNK) is a binding site for ITP. E42 is a Mg(2+) binding site. ITP is bound by residues K54, 70–71 (DT), K87, 146–149 (FGWD), K167, and 172–173 (HR).

This sequence belongs to the HAM1 NTPase family. As to quaternary structure, homodimer. The cofactor is Mg(2+). Mn(2+) serves as cofactor.

It localises to the cytoplasm. The protein resides in the nucleus. The enzyme catalyses ITP + H2O = IMP + diphosphate + H(+). It catalyses the reaction dITP + H2O = dIMP + diphosphate + H(+). It carries out the reaction XTP + H2O = XMP + diphosphate + H(+). In terms of biological role, pyrophosphatase that hydrolyzes non-canonical purine nucleotides such as inosine triphosphate (ITP), deoxyinosine triphosphate (dITP) or xanthosine 5'-triphosphate (XTP) to their respective monophosphate derivatives. The enzyme does not distinguish between the deoxy- and ribose forms. Probably excludes non-canonical purines from RNA and DNA precursor pools, thus preventing their incorporation into RNA and DNA and avoiding chromosomal lesions. The polypeptide is Inosine triphosphate pyrophosphatase (Pyricularia oryzae (strain 70-15 / ATCC MYA-4617 / FGSC 8958) (Rice blast fungus)).